A 123-amino-acid polypeptide reads, in one-letter code: Large ribosomal subunit protein uL14 (123 aa).

The protein belongs to the universal ribosomal protein uL14 family. As to quaternary structure, part of the 50S ribosomal subunit. Forms a cluster with proteins L3 and L19. In the 70S ribosome, L14 and L19 interact and together make contacts with the 16S rRNA in bridges B5 and B8.

Functionally, binds to 23S rRNA. Forms part of two intersubunit bridges in the 70S ribosome. The sequence is that of Large ribosomal subunit protein uL14 from Hamiltonella defensa subsp. Acyrthosiphon pisum (strain 5AT).